Here is a 188-residue protein sequence, read N- to C-terminus: Defensin-like protein 99 (188 aa).

The N-terminal stretch at M1–A28 is a signal peptide. 7 cysteine pairs are disulfide-bonded: C37–C95, C45–C77, C58–C92, C62–C94, C123–C178, C137–C175, and C141–C177.

Belongs to the DEFL family.

The protein resides in the secreted. In Arabidopsis thaliana (Mouse-ear cress), this protein is Defensin-like protein 99.